Reading from the N-terminus, the 280-residue chain is MSALILDGKALAKKTEDELTQCVDKLKASSGHTPILATILVGDDPASATYVKMKGNACSRIGMESLKVEMPTSTTTEQLLAKINELNANPAVHGILLQHPVPEQIDERACFDAIALEKDVDGVTCLGFGRMAMGEEAYGCATPKGIMRLLEAYNIELNGKHAVVVGRSPILGKPMAAMLLNANATVTICHSRTQNLEAHIKQADIVVGAVGKPEFIKAEWIKDGAVVVDAGYHPGGVGDIELAPLADRAAAITPVPGGVGPMTINTLIYQTVDSAQKKLG.

Residues 166-168 and Ser191 contribute to the NADP(+) site; that span reads GRS.

This sequence belongs to the tetrahydrofolate dehydrogenase/cyclohydrolase family. As to quaternary structure, homodimer.

It carries out the reaction (6R)-5,10-methylene-5,6,7,8-tetrahydrofolate + NADP(+) = (6R)-5,10-methenyltetrahydrofolate + NADPH. It catalyses the reaction (6R)-5,10-methenyltetrahydrofolate + H2O = (6R)-10-formyltetrahydrofolate + H(+). Its pathway is one-carbon metabolism; tetrahydrofolate interconversion. Functionally, catalyzes the oxidation of 5,10-methylenetetrahydrofolate to 5,10-methenyltetrahydrofolate and then the hydrolysis of 5,10-methenyltetrahydrofolate to 10-formyltetrahydrofolate. The protein is Bifunctional protein FolD of Saccharophagus degradans (strain 2-40 / ATCC 43961 / DSM 17024).